The sequence spans 360 residues: Phospho-N-acetylmuramoyl-pentapeptide-transferase (360 aa).

The next 10 helical transmembrane spans lie at alanine 26 to alanine 46, threonine 73 to leucine 93, tyrosine 97 to tyrosine 117, tryptophan 132 to alanine 152, valine 168 to serine 188, glycine 199 to serine 219, alanine 236 to phenylalanine 256, valine 263 to leucine 283, isoleucine 288 to valine 308, and valine 338 to lysine 358.

This sequence belongs to the glycosyltransferase 4 family. MraY subfamily. Requires Mg(2+) as cofactor.

It is found in the cell inner membrane. The catalysed reaction is UDP-N-acetyl-alpha-D-muramoyl-L-alanyl-gamma-D-glutamyl-meso-2,6-diaminopimeloyl-D-alanyl-D-alanine + di-trans,octa-cis-undecaprenyl phosphate = di-trans,octa-cis-undecaprenyl diphospho-N-acetyl-alpha-D-muramoyl-L-alanyl-D-glutamyl-meso-2,6-diaminopimeloyl-D-alanyl-D-alanine + UMP. It functions in the pathway cell wall biogenesis; peptidoglycan biosynthesis. Catalyzes the initial step of the lipid cycle reactions in the biosynthesis of the cell wall peptidoglycan: transfers peptidoglycan precursor phospho-MurNAc-pentapeptide from UDP-MurNAc-pentapeptide onto the lipid carrier undecaprenyl phosphate, yielding undecaprenyl-pyrophosphoryl-MurNAc-pentapeptide, known as lipid I. The protein is Phospho-N-acetylmuramoyl-pentapeptide-transferase of Shewanella halifaxensis (strain HAW-EB4).